A 4134-amino-acid chain; its full sequence is DNA-dependent protein kinase catalytic subunit (4134 aa).

HEAT repeat units follow at residues 900–937 (VIYL…VAYM), 1000–1036 (QDTV…LKWS), and 1050–1085 (ANTK…YREF). 2 TPR repeats span residues 1265 to 1305 (YNTF…HDIH) and 1722 to 1755 (PMSS…SQSP). At S2055 the chain carries Phosphoserine; by autocatalysis. The TPR 3 repeat unit spans residues 2207 to 2240 (DEILANRLLEFLMKNAFHQKRAVFRHNLEIIKTV). At T2609 the chain carries Phosphothreonine; by autocatalysis. The span at 2611 to 2629 (ASQSTNRNSSQERSLSISG) shows a compositional bias: polar residues. Positions 2611-2631 (ASQSTNRNSSQERSLSISGSV) are disordered. S2612 carries the post-translational modification Phosphoserine; by autocatalysis. Phosphothreonine; by autocatalysis occurs at positions 2638 and 2647. The 666-residue stretch at 2880–3545 (NVSTSCLASL…IYPFTISSES (666 aa)) folds into the FAT domain. Residues 3728 to 4059 (FDERIMVLES…VSYVKRKLTG (332 aa)) enclose the PI3K/PI4K catalytic domain. Residues 3734 to 3740 (VLESLRK) form a G-loop region. The segment at 3925 to 3933 (GIGDRHLSN) is catalytic loop. The interval 3945 to 3970 (GIDFGHAFGSATQFLPVPELMPFRLT) is activation loop. Residues 4102–4134 (DRLSEETQVRCLIDQATDPNLLGRVWEGWEPWM) enclose the FATC domain.

It belongs to the PI3/PI4-kinase family. In terms of assembly, DNA-PK is a heterotrimer of PRKDC and the Ku dimer (composed of XRCC6/Ku70 and XRCC5/Ku86). Component of the core long-range non-homologous end joining (NHEJ) complex (also named DNA-PK complex) composed of PRKDC, LIG4, XRCC4, XRCC6/Ku70, XRCC5/Ku86 and NHEJ1/XLF. Additional component of the NHEJ complex includes PAXX. Following autophosphorylation, PRKDC dissociates from DNA. Post-translationally, autophosphorylated at two clusters, the T2609 cluster and the S2056 cluster. Autophosphorylated on Ser-2055, Thr-2609, Thr-2638 and Thr-2647. Ser-2055 and Thr-2609 are DNA damage-inducible phosphorylation sites (inducible with ionizing radiation, IR) dephosphorylated by PPP5C. Autophosphorylation induces a conformational change that leads to remodeling of the DNA-PK complex, requisite for efficient end processing and DNA repair. Autophosphorylation in trans within DNA-PK complexes loaded on DNA ends leads to the dissociation of PRKDC from DNA and the transition into the short-range NHEJ complex. Autophosphorylation of the T2609 cluster is required for hematopoietic development and protein synthesis in erythrocytes precursors.

It localises to the nucleus. It is found in the nucleolus. The enzyme catalyses L-seryl-[protein] + ATP = O-phospho-L-seryl-[protein] + ADP + H(+). The catalysed reaction is L-threonyl-[protein] + ATP = O-phospho-L-threonyl-[protein] + ADP + H(+). Serine/threonine-protein kinase that acts as a molecular sensor for DNA damage. Involved in DNA nonhomologous end joining (NHEJ) required for double-strand break (DSB) repair and V(D)J recombination. Must be bound to DNA to express its catalytic properties. Promotes processing of hairpin DNA structures in V(D)J recombination by activation of the hairpin endonuclease artemis (DCLRE1C). Recruited by XRCC5 and XRCC6 to DNA ends and is required to (1) protect and align broken ends of DNA, thereby preventing their degradation, (2) and sequester the DSB for repair by NHEJ. Acts as a scaffold protein to aid the localization of DNA repair proteins to the site of damage. The assembly of the DNA-PK complex at DNA ends is also required for the NHEJ ligation step. Found at the ends of chromosomes, suggesting a further role in the maintenance of telomeric stability and the prevention of chromosomal end fusion. As part of the DNA-PK complex, involved in the early steps of ribosome assembly by promoting the processing of precursor rRNA into mature 18S rRNA in the small-subunit processome. Recognizes the substrate consensus sequence [ST]-Q. Phosphorylates 'Ser-139' of histone variant H2AX, thereby regulating DNA damage response mechanism. This chain is DNA-dependent protein kinase catalytic subunit (PRKDC), found in Gallus gallus (Chicken).